Here is a 172-residue protein sequence, read N- to C-terminus: MPQLDQFTYLTQFVWLCVFYMTFYVLLYNDGLPKISRIIKLRKRLVSQEKVGAEQSNDRVEQDVVFKECFQASANYLYSSVSGASKWCKGMVQLANAHKLQRMNKDYVCSLGEISVSQVIKKNALSTLSPSTYQTTSLASRQTTALNKIYVLRGQKRTLAKIKNGPRKKKIS.

A helical membrane pass occupies residues 13–29; that stretch reads FVWLCVFYMTFYVLLYN.

This sequence belongs to the ATPase protein YMF19 family. F-type ATPases have 2 components, CF(1) - the catalytic core - and CF(0) - the membrane proton channel. CF(1) has five subunits: alpha(3), beta(3), gamma(1), delta(1), epsilon(1). CF(0) has three main subunits: a, b and c.

It is found in the mitochondrion membrane. The enzyme catalyses ATP + H2O + 4 H(+)(in) = ADP + phosphate + 5 H(+)(out). This is one of the chains of the nonenzymatic component (CF(0) subunit) of the mitochondrial ATPase complex. This is Putative ATP synthase protein YMF19 (YMF19) from Marchantia polymorpha (Common liverwort).